Here is a 905-residue protein sequence, read N- to C-terminus: Translation initiation factor IF-2 (905 aa).

The segment covering 50–62 (HYEAKGGEDKAAE) has biased composition (basic and acidic residues). The tract at residues 50 to 306 (HYEAKGGEDK…QKHEVGGVRL (257 aa)) is disordered. Over residues 63–75 (KNAPAATPASASK) the composition is skewed to low complexity. Positions 89–125 (GPKPSAAPKPGAAPKPGGAPKPGGAPKPGATPKPGGA) are enriched in pro residues. Positions 161-171 (PFSTGSSSDRP) are enriched in low complexity. The span at 233–276 (GSGGGGRGRGGRGGGPGHGGPGHGGFRGRGGRRGGTAGAFGRPG) shows a compositional bias: gly residues. The segment covering 280-290 (RRGKKSKRQKR) has biased composition (basic residues). Residues 291–302 (HEFEEQQKHEVG) show a composition bias toward basic and acidic residues. One can recognise a tr-type G domain in the interval 401–575 (KRPPVVTVMG…LTADAALELT (175 aa)). Positions 410 to 417 (GHVDHGKT) are G1. Position 410 to 417 (410 to 417 (GHVDHGKT)) interacts with GTP. Residues 435 to 439 (GITQG) form a G2 region. The G3 stretch occupies residues 460–463 (DTPG). Residues 460-464 (DTPGH) and 514-517 (NKID) contribute to the GTP site. The segment at 514–517 (NKID) is G4. The tract at residues 550–552 (SAK) is G5.

Belongs to the TRAFAC class translation factor GTPase superfamily. Classic translation factor GTPase family. IF-2 subfamily.

The protein localises to the cytoplasm. Its function is as follows. One of the essential components for the initiation of protein synthesis. Protects formylmethionyl-tRNA from spontaneous hydrolysis and promotes its binding to the 30S ribosomal subunits. Also involved in the hydrolysis of GTP during the formation of the 70S ribosomal complex. The polypeptide is Translation initiation factor IF-2 (Corynebacterium aurimucosum (strain ATCC 700975 / DSM 44827 / CIP 107346 / CN-1) (Corynebacterium nigricans)).